The primary structure comprises 917 residues: Hexokinase-1 (917 aa).

Position 1 is an N-acetylmethionine (M1). The tract at residues 1–10 (MIAAQLLAYY) is mitochondrial-binding peptide (MBP). 2 consecutive Hexokinase domains span residues 16–458 (DDQV…MVTA) and 464–906 (AEQH…LITA). ATP-binding positions include R30 and 84–89 (DLGGSS). The segment at 73 to 207 (DGSEKGDFIA…DYDANIVAVV (135 aa)) is hexokinase small subdomain 1. 84–91 (DLGGSSFR) is a binding site for D-glucose 6-phosphate. D-glucose is bound by residues S155, 172 to 173 (TK), and 208 to 209 (ND). Positions 208–447 (NDTVGTMMTC…SDVRFLLSES (240 aa)) are hexokinase large subdomain 1. D-glucose 6-phosphate-binding residues include D209 and T232. D-glucose is bound by residues N235, E260, and 291 to 294 (QLFE). The residue at position 337 (S337) is a Phosphoserine. N345 serves as a coordination point for ATP. 413-415 (DGS) serves as a coordination point for D-glucose 6-phosphate. 425 to 426 (RR) contributes to the ATP binding site. Residues S449 and 532–536 (DLGGT) each bind D-glucose 6-phosphate. The tract at residues 521-655 (DGTENGDFLA…EFDLDVVAVV (135 aa)) is hexokinase small subdomain 2. Residue 532 to 537 (DLGGTN) participates in ATP binding. D-glucose is bound by residues 603 to 604 (SF), 620 to 621 (TK), and 656 to 657 (ND). The hexokinase large subdomain 2 stretch occupies residues 656–895 (NDTVGTMMTC…CNVSFLLSED (240 aa)). D-glucose 6-phosphate is bound by residues D657 and T680. T680 contributes to the ATP binding site. D-glucose-binding positions include 682-683 (SN), E708, and E742. ATP contacts are provided by residues 747-748 (GM), 784-788 (TKFLS), and 863-867 (TLYKL). D-glucose 6-phosphate is bound by residues 861-863 (DGT) and S897.

The protein belongs to the hexokinase family. Monomer. Interacts with RABL2/RABL2A; binds preferentially to GTP-bound RABL2. Interacts with VDAC1. The HK1-VDAC1 complex interacts with ATF2. Interacts (via N-terminal spermatogenic cell-specific region) with PFKM (via C-terminus). Interacts with SMAD5. As to expression, isoform 2: Erythrocyte specific. Isoform 3: Testis-specific. Isoform 4: Testis-specific.

It is found in the mitochondrion outer membrane. The protein resides in the cytoplasm. The protein localises to the cytosol. It carries out the reaction a D-hexose + ATP = a D-hexose 6-phosphate + ADP + H(+). It catalyses the reaction D-fructose + ATP = D-fructose 6-phosphate + ADP + H(+). The catalysed reaction is D-glucose + ATP = D-glucose 6-phosphate + ADP + H(+). The enzyme catalyses D-mannose + ATP = D-mannose 6-phosphate + ADP + H(+). It carries out the reaction D-glucosamine + ATP = D-glucosamine 6-phosphate + ADP + H(+). Its pathway is carbohydrate metabolism; hexose metabolism. It functions in the pathway carbohydrate degradation; glycolysis; D-glyceraldehyde 3-phosphate and glycerone phosphate from D-glucose: step 1/4. Hexokinase is an allosteric enzyme inhibited by its product D-glucose 6-phosphate. Hexokinase activity is inhibited by N-acetyl-D-glucosamine. Catalyzes the phosphorylation of various hexoses, such as D-glucose, D-glucosamine, D-fructose, D-mannose and 2-deoxy-D-glucose, to hexose 6-phosphate (D-glucose 6-phosphate, D-glucosamine 6-phosphate, D-fructose 6-phosphate, D-mannose 6-phosphate and 2-deoxy-D-glucose 6-phosphate, respectively). Does not phosphorylate N-acetyl-D-glucosamine. Mediates the initial step of glycolysis by catalyzing phosphorylation of D-glucose to D-glucose 6-phosphate. Involved in innate immunity and inflammation by acting as a pattern recognition receptor for bacterial peptidoglycan. When released in the cytosol, N-acetyl-D-glucosamine component of bacterial peptidoglycan inhibits the hexokinase activity of HK1 and causes its dissociation from mitochondrial outer membrane, thereby activating the NLRP3 inflammasome. This Homo sapiens (Human) protein is Hexokinase-1.